The following is a 207-amino-acid chain: Zinc finger protein JAGGED-like (207 aa).

Positions 1-16 (MRADENNTLDLNNLPD) are enriched in low complexity. Residues 1–20 (MRADENNTLDLNNLPDDPSR) form a disordered region. The segment at 50–72 (YECRFCSLKFFKSQALGGHMNRH) adopts a C2H2-type zinc-finger fold.

In terms of tissue distribution, expressed in the emerging leaf, stamen and carpel primordia. Not expressed in the apical shoot meristem (SAM).

It is found in the nucleus. In terms of biological role, acts with JAG to promote growth and patterning in stamens and carpels. Promotes the growth of the abaxial and adaxial sides of floral organs. Promotes the growth of the pollen-bearing microsporangia in anthers, the carpel walls of the gynoecium and the establishment of the correct number of cell layers in carpel walls. Promotes leaf blade growth and trichome development. The sequence is that of Zinc finger protein JAGGED-like (JGL) from Arabidopsis thaliana (Mouse-ear cress).